Reading from the N-terminus, the 60-residue chain is Large ribosomal subunit protein bL32 (60 aa).

The protein belongs to the bacterial ribosomal protein bL32 family.

The polypeptide is Large ribosomal subunit protein bL32 (Streptococcus equi subsp. zooepidemicus (strain MGCS10565)).